The following is a 124-amino-acid chain: Fluoride-specific ion channel FluC 1 (124 aa).

The next 4 helical transmembrane spans lie at 1–21, 30–50, 64–84, and 93–113; these read MCAV…ALGA, LWPG…LLGY, FLGV…VDAV, and LYVV…MLAG. Positions 71 and 74 each coordinate Na(+).

Belongs to the fluoride channel Fluc/FEX (TC 1.A.43) family.

It is found in the cell membrane. It carries out the reaction fluoride(in) = fluoride(out). Na(+) is not transported, but it plays an essential structural role and its presence is essential for fluoride channel function. In terms of biological role, fluoride-specific ion channel. Important for reducing fluoride concentration in the cell, thus reducing its toxicity. In Rhodococcus jostii (strain RHA1), this protein is Fluoride-specific ion channel FluC 1.